We begin with the raw amino-acid sequence, 256 residues long: Ribosomal RNA small subunit methyltransferase A (256 aa).

The S-adenosyl-L-methionine site is built by His-12, Leu-14, Gly-39, Glu-60, Asp-83, and Asn-101.

Belongs to the class I-like SAM-binding methyltransferase superfamily. rRNA adenine N(6)-methyltransferase family. RsmA subfamily.

Its subcellular location is the cytoplasm. The catalysed reaction is adenosine(1518)/adenosine(1519) in 16S rRNA + 4 S-adenosyl-L-methionine = N(6)-dimethyladenosine(1518)/N(6)-dimethyladenosine(1519) in 16S rRNA + 4 S-adenosyl-L-homocysteine + 4 H(+). Specifically dimethylates two adjacent adenosines (A1518 and A1519) in the loop of a conserved hairpin near the 3'-end of 16S rRNA in the 30S particle. May play a critical role in biogenesis of 30S subunits. The chain is Ribosomal RNA small subunit methyltransferase A from Nitrosomonas eutropha (strain DSM 101675 / C91 / Nm57).